We begin with the raw amino-acid sequence, 683 residues long: DNA ligase (683 aa).

NAD(+)-binding positions include 44–48 (DAEYD), 93–94 (SL), and glutamate 127. Residue lysine 129 is the N6-AMP-lysine intermediate of the active site. 4 residues coordinate NAD(+): arginine 150, glutamate 187, lysine 302, and lysine 326. Zn(2+) contacts are provided by cysteine 420, cysteine 423, cysteine 438, and cysteine 444. The region spanning 601–683 (RVGGRLAGLT…SKLLATGGNQ (83 aa)) is the BRCT domain.

The protein belongs to the NAD-dependent DNA ligase family. LigA subfamily. The cofactor is Mg(2+). Requires Mn(2+) as cofactor.

It carries out the reaction NAD(+) + (deoxyribonucleotide)n-3'-hydroxyl + 5'-phospho-(deoxyribonucleotide)m = (deoxyribonucleotide)n+m + AMP + beta-nicotinamide D-nucleotide.. In terms of biological role, DNA ligase that catalyzes the formation of phosphodiester linkages between 5'-phosphoryl and 3'-hydroxyl groups in double-stranded DNA using NAD as a coenzyme and as the energy source for the reaction. It is essential for DNA replication and repair of damaged DNA. This is DNA ligase from Trichlorobacter lovleyi (strain ATCC BAA-1151 / DSM 17278 / SZ) (Geobacter lovleyi).